Consider the following 478-residue polypeptide: MAELADAPDLGSGARKGVRVRLPPPAPHKNGGKNESRGSGQGSLFKALTVEIQGDSVKEKIDEMYKQLQKTVQIQGFRKGKAPLWIVRAKYKDYVEEEVGKKIADETLQKALEEANLKPVADVFLEKVEVDEKEGKVKYVVSFEVAPEFELKDVENLEVEVPKIEFKEDYVKEELERLREANAVWEPKDENEPAQEGDMLVVEYEVEEIGGEGEKVKQETSVILGQGMLRPEVEEALKGKKVGEEVELKELPLYDQEGKEVGKVNIKIKIKEIKKKVLPELNDEFAKELGYASLKDLEEKIREDIKQKLEKLKEQVIEERVADKLVEIHDIPVPQTLLRRELSFLVDRRLRELQALGIDTRYVDIKKIVEEVQPIAEANIKLRFILDKYAQEKGIEPTGEDIEAQYKELAEQYGTTVDEIKKYFKENNLEQVVYEDARRKKALKEIISKVKIKEVEQKQEEEKKEEKEEVKNESQGNT.

Residues 1 to 41 are disordered; the sequence is MAELADAPDLGSGARKGVRVRLPPPAPHKNGGKNESRGSGQ. Positions 197 to 279 constitute a PPIase FKBP-type domain; it reads GDMLVVEYEV…IKEIKKKVLP (83 aa). A compositionally biased stretch (basic and acidic residues) spans 455–472; that stretch reads VEQKQEEEKKEEKEEVKN. The disordered stretch occupies residues 455–478; that stretch reads VEQKQEEEKKEEKEEVKNESQGNT.

It belongs to the FKBP-type PPIase family. Tig subfamily.

It is found in the cytoplasm. It catalyses the reaction [protein]-peptidylproline (omega=180) = [protein]-peptidylproline (omega=0). In terms of biological role, involved in protein export. Acts as a chaperone by maintaining the newly synthesized protein in an open conformation. Functions as a peptidyl-prolyl cis-trans isomerase. In Aquifex aeolicus (strain VF5), this protein is Trigger factor.